Here is an 89-residue protein sequence, read N- to C-terminus: Small ribosomal subunit protein uS19 (89 aa).

Belongs to the universal ribosomal protein uS19 family.

Protein S19 forms a complex with S13 that binds strongly to the 16S ribosomal RNA. This is Small ribosomal subunit protein uS19 from Parabacteroides distasonis (strain ATCC 8503 / DSM 20701 / CIP 104284 / JCM 5825 / NCTC 11152).